We begin with the raw amino-acid sequence, 203 residues long: dITP/XTP pyrophosphatase (203 aa).

15 to 20 is a substrate binding site; sequence SGNAGK. Mg(2+)-binding residues include Glu-45 and Asp-74. The active-site Proton acceptor is Asp-74. Substrate contacts are provided by residues Ser-75, 153 to 156, Lys-176, and 181 to 182; these read FGYD and HR.

Belongs to the HAM1 NTPase family. As to quaternary structure, homodimer. Requires Mg(2+) as cofactor.

The catalysed reaction is XTP + H2O = XMP + diphosphate + H(+). It carries out the reaction dITP + H2O = dIMP + diphosphate + H(+). The enzyme catalyses ITP + H2O = IMP + diphosphate + H(+). In terms of biological role, pyrophosphatase that catalyzes the hydrolysis of nucleoside triphosphates to their monophosphate derivatives, with a high preference for the non-canonical purine nucleotides XTP (xanthosine triphosphate), dITP (deoxyinosine triphosphate) and ITP. Seems to function as a house-cleaning enzyme that removes non-canonical purine nucleotides from the nucleotide pool, thus preventing their incorporation into DNA/RNA and avoiding chromosomal lesions. The polypeptide is dITP/XTP pyrophosphatase (Prochlorococcus marinus (strain MIT 9313)).